Here is an 868-residue protein sequence, read N- to C-terminus: Pentatricopeptide repeat-containing protein At2g27610 (868 aa).

18 PPR repeats span residues 57–91, 92–126, 127–157, 158–192, 193–227, 228–258, 259–293, 294–328, 329–359, 361–395, 396–426, 427–457, 458–492, 493–528, 529–559, 560–594, 595–625, and 631–661; these read DRES…GMEM, DCSI…GFLD, DVSV…MKER, NVVT…GTQP, NSFT…GLDK, TIPV…TEVK, SVVT…YVRL, SESS…GFLF, DQNI…IGCV, NVVS…GVRP, NEFT…NYER, SSTV…IDDK, DIVA…GIKP, NEFT…RLDS, SLCV…QREK, DLVS…KVKM, DGVT…MVRD, and TKEH…MPNP. The interval 666 to 741 is type E motif; the sequence is IWRTILAACR…EPGYSWIEVK (76 aa). The segment at 742 to 772 is type E(+) motif; it reads NKTYSFLAGDRSHPLKDQIYMKLEDLSTRLK. Positions 773–868 are type DYW motif; it reads DLGYEPDTSY…DGVCSCGDFW (96 aa).

The protein belongs to the PPR family. PCMP-H subfamily.

This Arabidopsis thaliana (Mouse-ear cress) protein is Pentatricopeptide repeat-containing protein At2g27610 (PCMP-H60).